A 267-amino-acid polypeptide reads, in one-letter code: NAD-capped RNA hydrolase NudC (267 aa).

Residue R70 participates in substrate binding. 2 residues coordinate Zn(2+): C99 and C102. E112 contacts substrate. Zn(2+) is bound by residues C117 and C122. Y127 contacts substrate. In terms of domain architecture, Nudix hydrolase spans 128 to 257; sequence PVICPSIIVA…TIARALIEAT (130 aa). Positions 166, 182, and 186 each coordinate a divalent metal cation. The Nudix box signature appears at 167–188; sequence GFVEVGESFEQTIHREVFEETG. Residue 200–207 participates in substrate binding; that stretch reads QPWAFPNS. E227 serves as a coordination point for a divalent metal cation. Residue A250 coordinates substrate.

The protein belongs to the Nudix hydrolase family. NudC subfamily. As to quaternary structure, homodimer. The cofactor is Mg(2+). Requires Mn(2+) as cofactor. Zn(2+) serves as cofactor.

The catalysed reaction is a 5'-end NAD(+)-phospho-ribonucleoside in mRNA + H2O = a 5'-end phospho-adenosine-phospho-ribonucleoside in mRNA + beta-nicotinamide D-ribonucleotide + 2 H(+). It catalyses the reaction NAD(+) + H2O = beta-nicotinamide D-ribonucleotide + AMP + 2 H(+). It carries out the reaction NADH + H2O = reduced beta-nicotinamide D-ribonucleotide + AMP + 2 H(+). MRNA decapping enzyme that specifically removes the nicotinamide adenine dinucleotide (NAD) cap from a subset of mRNAs by hydrolyzing the diphosphate linkage to produce nicotinamide mononucleotide (NMN) and 5' monophosphate mRNA. The NAD-cap is present at the 5'-end of some mRNAs and stabilizes RNA against 5'-processing. Has preference for mRNAs with a 5'-end purine. Catalyzes the hydrolysis of a broad range of dinucleotide pyrophosphates. This Mannheimia succiniciproducens (strain KCTC 0769BP / MBEL55E) protein is NAD-capped RNA hydrolase NudC.